The sequence spans 288 residues: Bis(5'-nucleosyl)-tetraphosphatase, symmetrical (288 aa).

Belongs to the Ap4A hydrolase family.

It catalyses the reaction P(1),P(4)-bis(5'-adenosyl) tetraphosphate + H2O = 2 ADP + 2 H(+). Functionally, hydrolyzes diadenosine 5',5'''-P1,P4-tetraphosphate to yield ADP. This is Bis(5'-nucleosyl)-tetraphosphatase, symmetrical from Pseudomonas putida (strain ATCC 700007 / DSM 6899 / JCM 31910 / BCRC 17059 / LMG 24140 / F1).